Here is a 399-residue protein sequence, read N- to C-terminus: Lysosomal acid lipase/cholesteryl ester hydrolase (399 aa).

The signal sequence occupies residues 1-27 (MKMRFLGLVVCLVLWTLHSEGSGGKLT). A propeptide spans 28–76 (AVDPETNMNVSEIISYWGFPSEEYLVETEDGYILCLNRIPHGRKNHSDK) (removed in mature form). 4 N-linked (GlcNAc...) asparagine glycosylation sites follow: N36, N72, N101, and N161. Positions 80 to 380 (PVVFLQHGLL…EWEHLDFIWG (301 aa)) constitute an AB hydrolase-1 domain. S174 functions as the Charge relay system in the catalytic mechanism. 2 N-linked (GlcNAc...) asparagine glycosylation sites follow: N273 and N321. H374 serves as the catalytic Charge relay system.

This sequence belongs to the AB hydrolase superfamily. Lipase family. As to quaternary structure, monomer. In terms of processing, glycosylation is not essential for catalytic activity. In terms of tissue distribution, most abundantly expressed in brain, lung, kidney and mammary gland, a moderate expression seen in placenta and expressed at low levels in the liver and heart.

It is found in the lysosome. It carries out the reaction a sterol ester + H2O = a sterol + a fatty acid + H(+). The enzyme catalyses cholesteryl (9Z-octadecenoate) + H2O = cholesterol + (9Z)-octadecenoate + H(+). The catalysed reaction is a triacylglycerol + H2O = a 1,2-diacylglycerol + a fatty acid + H(+). It catalyses the reaction 1,2-di-(9Z-octadecenoyl)-glycerol + (9Z)-octadecenoate + H(+) = 1,2,3-tri-(9Z-octadecenoyl)-glycerol + H2O. It carries out the reaction a 1,2-diacylglycerol + H2O = a 1-acylglycerol + a fatty acid + H(+). The enzyme catalyses 1,2-di-(9Z-octadecenoyl)-glycerol + H2O = 1-(9Z-octadecenoyl)-glycerol + (9Z)-octadecenoate + H(+). The catalysed reaction is a 1,3-diacylglycerol + H2O = a 1-acylglycerol + a fatty acid + H(+). It catalyses the reaction 1,3-di-(9Z-octadecenoyl)-glycerol + H2O = 1-(9Z-octadecenoyl)-glycerol + (9Z)-octadecenoate + H(+). Its function is as follows. Catalyzes the deacylation of cholesteryl ester core lipids of endocytosed low density lipoproteins to generate free fatty acids and cholesterol. Hydrolyzes triglycerides (1,2,3-triacylglycerol) and diglycerides (such as 1,2-diacylglycerol and 1,3-diacylglycerol) with preference for the acyl moieties at the sn-1 or sn-3 positions. The polypeptide is Lysosomal acid lipase/cholesteryl ester hydrolase (LIPA) (Homo sapiens (Human)).